Reading from the N-terminus, the 199-residue chain is NAD(P)H dehydrogenase (quinone) (199 aa).

A Flavodoxin-like domain is found at 4–190; that stretch reads VLVLYYSAYG…AGARYQGRRV (187 aa). Residues 10-15 and 78-80 contribute to the FMN site; these read SAYGHI and TRF. Y12 is an NAD(+) binding site. Residue W98 coordinates substrate. FMN contacts are provided by residues 113–119 and H134; that span reads STATQHG.

This sequence belongs to the WrbA family. Requires FMN as cofactor.

The enzyme catalyses a quinone + NADH + H(+) = a quinol + NAD(+). It carries out the reaction a quinone + NADPH + H(+) = a quinol + NADP(+). The polypeptide is NAD(P)H dehydrogenase (quinone) (Methylocella silvestris (strain DSM 15510 / CIP 108128 / LMG 27833 / NCIMB 13906 / BL2)).